Here is a 604-residue protein sequence, read N- to C-terminus: Glutamine--fructose-6-phosphate aminotransferase [isomerizing] (604 aa).

Cysteine 2 acts as the Nucleophile; for GATase activity in catalysis. In terms of domain architecture, Glutamine amidotransferase type-2 spans 2 to 219 (CGIMGAVSER…EGDSACVTTQ (218 aa)). 2 SIS domains span residues 279-427 (LRAS…DNRA) and 454-594 (LASL…VDQP). The For Fru-6P isomerization activity role is filled by lysine 599.

Homodimer.

It localises to the cytoplasm. The catalysed reaction is D-fructose 6-phosphate + L-glutamine = D-glucosamine 6-phosphate + L-glutamate. Its function is as follows. Catalyzes the first step in hexosamine metabolism, converting fructose-6P into glucosamine-6P using glutamine as a nitrogen source. The polypeptide is Glutamine--fructose-6-phosphate aminotransferase [isomerizing] (Legionella pneumophila (strain Paris)).